Consider the following 275-residue polypeptide: Polyamine aminopropyltransferase (275 aa).

A PABS domain is found at 2-235 (ELWFTEKQTK…GLWTFTIGSK (234 aa)). Glutamine 31 contributes to the S-methyl-5'-thioadenosine binding site. Histidine 62 and aspartate 86 together coordinate spermidine. S-methyl-5'-thioadenosine is bound by residues glutamate 106 and 137 to 138 (DG). Aspartate 155 serves as the catalytic Proton acceptor. 155-158 (DSTE) provides a ligand contact to spermidine. Proline 162 is a binding site for S-methyl-5'-thioadenosine.

The protein belongs to the spermidine/spermine synthase family. As to quaternary structure, homodimer or homotetramer.

It is found in the cytoplasm. It carries out the reaction S-adenosyl 3-(methylsulfanyl)propylamine + putrescine = S-methyl-5'-thioadenosine + spermidine + H(+). The protein operates within amine and polyamine biosynthesis; spermidine biosynthesis; spermidine from putrescine: step 1/1. Catalyzes the irreversible transfer of a propylamine group from the amino donor S-adenosylmethioninamine (decarboxy-AdoMet) to putrescine (1,4-diaminobutane) to yield spermidine. The protein is Polyamine aminopropyltransferase of Bacillus cytotoxicus (strain DSM 22905 / CIP 110041 / 391-98 / NVH 391-98).